Here is a 1135-residue protein sequence, read N- to C-terminus: Glutamate receptor ionotropic, NMDA 3A (1135 aa).

A signal peptide spans 1–23 (MRRLSLWWLLSRVCLLLPPPCAL). The Extracellular portion of the chain corresponds to 24 to 674 (VLAGVPSSSS…PIGAFMWPLH (651 aa)). The disordered stretch occupies residues 60–117 (TAPRAASRAQEGGRAGAQRDDPESGTWRPPAPSQGARWLGSALHGRGPPGSRKLGEGA). N-linked (GlcNAc...) asparagine glycans are attached at residues Asn-145, Asn-264, Asn-275, Asn-285, Asn-296, Asn-300, Asn-426, Asn-439, Asn-549, and Asn-565. Intrachain disulfides connect Cys-537–Cys-575 and Cys-543–Cys-576. Glycine contacts are provided by Ser-631, Ser-633, and Arg-638. Positions 633 and 638 each coordinate D-serine. A helical membrane pass occupies residues 675 to 694 (WTMWLGIFVALHITAIFLTL). The Cytoplasmic segment spans residues 695–715 (YEWKSPFGMTPKGRNRNKVFS). Positions 716-727 (FSSALNVCYALL) form an intramembrane region, discontinuously helical. The Cytoplasmic segment spans residues 728–741 (FGRTAAIKPPKCWT). The chain crosses the membrane as a helical span at residues 742–761 (GRFLMNLWAIFCMFCLSTYT). The Extracellular segment spans residues 762–932 (ANLAAVMVGE…TLQMGIKHFS (171 aa)). Residue Ser-801 coordinates glycine. Residues Ser-801, Ala-802, and Asp-845 each contribute to the D-serine site. Position 845 (Asp-845) interacts with glycine. Cys-859 and Cys-913 form a disulfide bridge. The N-linked (GlcNAc...) asparagine glycan is linked to Asn-886. A helical transmembrane segment spans residues 933 to 948 (GLFVLLCIGFGLSILT). Over 949–1135 (TIGEHIVHRL…YQKTNRTCES (187 aa)) the chain is Cytoplasmic. Positions 951–987 (GEHIVHRLLLPRIKNKSKLQYWLHTSQRFHRALNTSF) are PPP2CB binding site. The stretch at 1080 to 1129 (TTNGKADSLNVTRSSVIQELSELEKQIQVIRQELQLAVSRKTELEEYQKT) forms a coiled coil. The GIT1-binding stretch occupies residues 1082 to 1115 (NGKADSLNVTRSSVIQELSELEKQIQVIRQELQL).

Belongs to the glutamate-gated ion channel (TC 1.A.10.1) family. NR3A/GRIN3A subfamily. As to quaternary structure, heterotetramer. Forms heterotetrameric channels composed of two GluN1/zeta subunits (GRIN1), and two identical GluN3 subunits (GRIN3A or GRIN3B) (in vitro). Can also form heterotetrameric channels that contain at least two GluN1 subunits and at least a combination of one GluN2 and one GluN3 subunits (in vitro). Does not form functional homomeric channels. Found in a complex with GRIN1, GRIN2A or GRIN2B and PPP2CB. Probably interacts with PPP2CB. No complex with PPP2CB is detected when NMDARs are stimulated by NMDA. Interacts (via C-terminus) with GIT1, but not with GRIA1/GluA1, nor with synaptophysin/SYP; this interaction competes with GIT1 interaction with ARHGEF7/beta-PIX. Post-translationally, N-glycosylated. In terms of tissue distribution, isoform 1 and isoform 2 are expressed in olfactory bulb, frontal occipital, entorhinal and pyriform cortices, hippocampus, striatum, thalamus, cerebellum and spinal cord.

It is found in the cell membrane. The protein resides in the postsynaptic cell membrane. The protein localises to the postsynaptic density. It carries out the reaction Ca(2+)(in) = Ca(2+)(out). The enzyme catalyses Na(+)(in) = Na(+)(out). Its activity is regulated as follows. Excitatory glycine receptors are inhibited by D-serine at a concentrion of 10uM. Component of a non-conventional N-methyl-D-aspartate (NMDA) receptors (NMDARs) that function as heterotetrameric, ligand-gated cation channels with low calcium permeability and low voltage-dependent block by Mg(2+). During the development of neural circuits, participates in the synaptic refinement period, restricting spine maturation and growth. Forms glutamatergic receptor complexes with GluN1 and GluN2 subunits which are activated by glycine binding to the GluN1 and GluN3 subunits and L-glutamate binding to GluN2 subunits. Forms excitatory glycinergic receptor complexes with GluN1 alone which are activated by glycine binding to the GluN1 and GluN3 subunits. GluN3A subunit also binds D-serine. Each GluN3 subunit confers differential attributes to channel properties, including activation, deactivation and desensitization kinetics, pH sensitivity, Ca2(+) permeability, and binding to allosteric modulators. By competing with GIT1 interaction with ARHGEF7/beta-PIX, may reduce GIT1/ARHGEF7-regulated local activation of RAC1, hence affecting signaling and limiting the maturation and growth of inactive synapses. The sequence is that of Glutamate receptor ionotropic, NMDA 3A from Rattus norvegicus (Rat).